Consider the following 240-residue polypeptide: Protein FATTY ACID EXPORT 2, chloroplastic (240 aa).

The transit peptide at 1–84 (MADLILSSSS…TANCVDSGVK (84 aa)) directs the protein to the chloroplast. Over residues 97–113 (GGGIGGDKFGGGGGGGD) the composition is skewed to gly residues. A disordered region spans residues 97-134 (GGGIGGDKFGGGGGGGDGNDDGGEDDKEESDGKKSTPL). Residues 114-125 (GNDDGGEDDKEE) show a composition bias toward acidic residues. The next 3 helical transmembrane spans lie at 164–184 (SLLA…QLPT), 186–206 (PVLA…VMGT), and 214–234 (IFPA…YIHG).

The protein belongs to the TMEM14 family.

Its subcellular location is the plastid. It is found in the chloroplast membrane. Functionally, may be involved in free fatty acids export from the plastids. This chain is Protein FATTY ACID EXPORT 2, chloroplastic, found in Arabidopsis thaliana (Mouse-ear cress).